The primary structure comprises 65 residues: Disintegrin CC8A (65 aa).

The region spanning 1–65 (MNSAHPCCDP…SDCPRNRIKK (65 aa)) is the Disintegrin domain. Cystine bridges form between Cys-7–Cys-30, Cys-21–Cys-27, Cys-26–Cys-51, and Cys-39–Cys-58. The Cell attachment site motif lies at 43–45 (RGD).

Belongs to the disintegrin family. Dimeric disintegrin subfamily. In terms of assembly, heterodimer with CC8B; disulfide-linked. Expressed by the venom gland.

Its subcellular location is the secreted. Inhibits integrins alpha-IIb/beta-3 (ITGA2B/ITGB3), alpha-V/beta-3 (ITGAV/ITGB3), and alpha-5/beta-1 (ITGA5/ITGB1). The sequence is that of Disintegrin CC8A from Cerastes cerastes (Horned desert viper).